The primary structure comprises 133 residues: Ribosome-binding factor A (133 aa).

The protein belongs to the RbfA family. Monomer. Binds 30S ribosomal subunits, but not 50S ribosomal subunits or 70S ribosomes.

The protein localises to the cytoplasm. Its function is as follows. One of several proteins that assist in the late maturation steps of the functional core of the 30S ribosomal subunit. Associates with free 30S ribosomal subunits (but not with 30S subunits that are part of 70S ribosomes or polysomes). Required for efficient processing of 16S rRNA. May interact with the 5'-terminal helix region of 16S rRNA. This chain is Ribosome-binding factor A, found in Nostoc sp. (strain PCC 7120 / SAG 25.82 / UTEX 2576).